A 100-amino-acid chain; its full sequence is Acylphosphatase (100 aa).

In terms of domain architecture, Acylphosphatase-like spans 14-100 (RWRFFVEGKV…TGADWFEIRS (87 aa)). Active-site residues include Arg29 and Asn47.

It belongs to the acylphosphatase family.

It carries out the reaction an acyl phosphate + H2O = a carboxylate + phosphate + H(+). The protein is Acylphosphatase (acyP) of Synechococcus sp. (strain WH7803).